The chain runs to 66 residues: Toxin Os1 (66 aa).

One can recognise an LCN-type CS-alpha/beta domain in the interval 2 to 66 (RDGYIVQLHN…PIKWLDPKCY (65 aa)). Intrachain disulfides connect Cys12–Cys65, Cys16–Cys37, Cys22–Cys47, and Cys26–Cys49.

This sequence belongs to the long (4 C-C) scorpion toxin superfamily. Sodium channel inhibitor family. Alpha subfamily. In terms of tissue distribution, expressed by the venom gland.

The protein resides in the secreted. Its function is as follows. Alpha toxins bind voltage-independently at site-3 of sodium channels (Nav) and inhibit the inactivation of the activated channels, thereby blocking neuronal transmission. This toxin possesses a high paralytic activity against mice. The protein is Toxin Os1 of Orthochirus scrobiculosus (Central Asian scorpion).